A 450-amino-acid chain; its full sequence is F-box/FBD/LRR-repeat protein At5g22660 (450 aa).

One can recognise an F-box domain in the interval 12 to 58 (EDRISSLPDHLLSQILSNLPTENAVTTSILSTRWKDLWLSTPVLDID). LRR repeat units lie at residues 157-181 (LPNL…KFIS) and 294-317 (LSSL…LKHE). In terms of domain architecture, FBD spans 364 to 416 (EEISLSSSVPKCLQSSLENVEIIRPNYGSGEEMKLSKYFLENSLVLKKFKLCR).

The sequence is that of F-box/FBD/LRR-repeat protein At5g22660 from Arabidopsis thaliana (Mouse-ear cress).